A 359-amino-acid polypeptide reads, in one-letter code: Peptide chain release factor 1 (359 aa).

The residue at position 235 (Q235) is an N5-methylglutamine. Residues 280–306 are disordered; sequence AERQRADSERSADRKSQVGSGDRSERI.

The protein belongs to the prokaryotic/mitochondrial release factor family. Methylated by PrmC. Methylation increases the termination efficiency of RF1.

The protein resides in the cytoplasm. In terms of biological role, peptide chain release factor 1 directs the termination of translation in response to the peptide chain termination codons UAG and UAA. This is Peptide chain release factor 1 from Rhizobium leguminosarum bv. trifolii (strain WSM2304).